Here is a 170-residue protein sequence, read N- to C-terminus: MGAKSKQYFNIFVFVISLIFFDQLSKYLVVKYVKLGSIYFSFFDNFFRIIHVRNTGILFSMGSDIHYSLKKIFFIAMPIFILIFVFSLALKEKNCITRISLLLIFSGGVGNIIDRLFRPSGVVDFLDFKFYGIFGLDRWPTFNFADSYVVIGMILFLVYDFFIKRKVLNT.

3 helical membrane passes run 9-29, 72-92, and 95-117; these read FNIF…KYLV, IFFI…ALKE, and CITR…DRLF. Active-site residues include aspartate 124 and aspartate 146. The chain crosses the membrane as a helical span at residues 143 to 163; the sequence is NFADSYVVIGMILFLVYDFFI.

Belongs to the peptidase A8 family.

It is found in the cell inner membrane. The enzyme catalyses Release of signal peptides from bacterial membrane prolipoproteins. Hydrolyzes -Xaa-Yaa-Zaa-|-(S,diacylglyceryl)Cys-, in which Xaa is hydrophobic (preferably Leu), and Yaa (Ala or Ser) and Zaa (Gly or Ala) have small, neutral side chains.. The protein operates within protein modification; lipoprotein biosynthesis (signal peptide cleavage). Its function is as follows. This protein specifically catalyzes the removal of signal peptides from prolipoproteins. The polypeptide is Lipoprotein signal peptidase (Borrelia garinii subsp. bavariensis (strain ATCC BAA-2496 / DSM 23469 / PBi) (Borreliella bavariensis)).